Here is a 548-residue protein sequence, read N- to C-terminus: Biotin-dependent acetyl-/propionyl-coenzyme A carboxylase beta5 subunit (548 aa).

Residues 1 to 23 (MTSVTDRSAHSAERSTEHTIDIH) are disordered. Positions 7–21 (RSAHSAERSTEHTID) are enriched in basic and acidic residues. The CoA carboxyltransferase N-terminal domain maps to 25–281 (TAGKLAELHK…NNSTDAPRYQ (257 aa)). Residues 295–541 (DEDLELDTLI…ERKIAQLPPK (247 aa)) enclose the CoA carboxyltransferase C-terminal domain.

This sequence belongs to the AccD/PCCB family. In terms of assembly, forms homohexamers. The biotin-dependent acyl-CoA carboxylase complex is composed of AccA3, which contains the biotin carboxylase (BC) and biotin carboxyl carrier protein (BCCP) domains, and AccD5, which contains the carboxyl transferase (CT) domain. The AccA3/AccD5 complex forms a dodecamer, and can associate with the epsilon subunit AccE5 (Rv3280), which stimulates carboxylation by the complex. Is also part of the long-chain acyl-CoA carboxylase (LCC) complex, which is composed of AccA3, AccD4, AccD5 and AccE5. The four subunits are essential for activity, but AccD5, together with AccE5, probably plays a structural role rather than a catalytic one.

The enzyme catalyses N(6)-carboxybiotinyl-L-lysyl-[protein] + acetyl-CoA = N(6)-biotinyl-L-lysyl-[protein] + malonyl-CoA. It catalyses the reaction N(6)-carboxybiotinyl-L-lysyl-[protein] + propanoyl-CoA = methylmalonyl-CoA + N(6)-biotinyl-L-lysyl-[protein]. Its pathway is lipid metabolism; mycolic acid biosynthesis. Carboxylase activity of the AccA3/AccD5 complex is stimulated by interaction with AccE5. In terms of biological role, component of a biotin-dependent acyl-CoA carboxylase complex. This subunit transfers the CO2 from carboxybiotin to the CoA ester substrate. When associated with the alpha3 subunit AccA3, is involved in the carboxylation of acetyl-CoA and propionyl-CoA, with a preference for propionyl-CoA. Is also required for the activity of the long-chain acyl-CoA carboxylase (LCC) complex. This Mycobacterium tuberculosis (strain ATCC 25618 / H37Rv) protein is Biotin-dependent acetyl-/propionyl-coenzyme A carboxylase beta5 subunit.